The sequence spans 124 residues: UPF0212 protein Hlac_0869 (124 aa).

It belongs to the UPF0212 family.

This chain is UPF0212 protein Hlac_0869, found in Halorubrum lacusprofundi (strain ATCC 49239 / DSM 5036 / JCM 8891 / ACAM 34).